The primary structure comprises 414 residues: Arrestin domain-containing protein 3 (414 aa).

2 short sequence motifs (PPxY motif) span residues 346-349 and 391-394; these read PPSY and PPLY. Residues 393–414 are disordered; the sequence is LYSEIDPNPDQSADDRPSCPSR. The segment covering 405–414 has biased composition (basic and acidic residues); it reads ADDRPSCPSR.

Belongs to the arrestin family. Interacts (via PPxY motifs) with NEDD4 (via WW domains). Interacts with ADRB2. Interacts with ADRB3. Interacts with HGS (via PPxY motifs). Does not bind TXN (thioredoxin). Interacts with ITCH.

The protein resides in the cytoplasm. It localises to the cell membrane. It is found in the lysosome. The protein localises to the endosome. Its subcellular location is the early endosome. In terms of biological role, adapter protein that plays a role in regulating cell-surface expression of adrenergic receptors and probably also other G protein-coupled receptors. Plays a role in NEDD4-mediated ubiquitination and endocytosis af activated ADRB2 and subsequent ADRB2 degradation. May recruit NEDD4 to ADRB2. Alternatively, may function as adapter protein that does not play a major role in recruiting NEDD4 to ADRB2, but rather plays a role in a targeting ADRB2 to endosomes. The protein is Arrestin domain-containing protein 3 (ARRDC3) of Pongo abelii (Sumatran orangutan).